A 548-amino-acid chain; its full sequence is Chaperonin GroEL (548 aa).

ATP is bound by residues 30–33 (TLGP), K51, 87–91 (DGTTT), G415, and D494.

It belongs to the chaperonin (HSP60) family. As to quaternary structure, forms a cylinder of 14 subunits composed of two heptameric rings stacked back-to-back. Interacts with the co-chaperonin GroES.

The protein localises to the cytoplasm. It carries out the reaction ATP + H2O + a folded polypeptide = ADP + phosphate + an unfolded polypeptide.. Functionally, together with its co-chaperonin GroES, plays an essential role in assisting protein folding. The GroEL-GroES system forms a nano-cage that allows encapsulation of the non-native substrate proteins and provides a physical environment optimized to promote and accelerate protein folding. This is Chaperonin GroEL from Oleispira antarctica.